Here is a 548-residue protein sequence, read N- to C-terminus: T-complex protein 1 subunit theta (548 aa).

A2 carries the N-acetylalanine modification. Residue S23 is modified to Phosphoserine. Y30 carries the phosphotyrosine modification. Residues Y47 and G48 each coordinate ADP. Residue D99 participates in Mg(2+) binding. The ADP site is built by G100, T101, N102, and F103. Residues G100, T101, and N102 each coordinate ATP. A Phosphoserine modification is found at S162. 3 residues coordinate ADP: M169, S170, and K171. The ATP site is built by S170 and K171. S213 is modified (phosphoserine). Residues K224, K254, and K260 each participate in a glycyl lysine isopeptide (Lys-Gly) (interchain with G-Cter in SUMO2) cross-link. 2 positions are modified to phosphoserine: S269 and S317. K318 and K400 each carry N6-acetyllysine. G412 is an ADP binding site. G412 contributes to the ATP binding site. K459 is covalently cross-linked (Glycyl lysine isopeptide (Lys-Gly) (interchain with G-Cter in SUMO1)). K466 is modified (N6-acetyllysine). Residue D499 participates in ADP binding. D499 and K504 together coordinate ATP. Residue Y505 is modified to Phosphotyrosine. Residues 529-548 are disordered; that stretch reads PAGGPKPPSGKKDWDDDQND. Residue K534 forms a Glycyl lysine isopeptide (Lys-Gly) (interchain with G-Cter in SUMO2) linkage. Position 537 is a phosphoserine (S537). K539 is covalently cross-linked (Glycyl lysine isopeptide (Lys-Gly) (interchain with G-Cter in SUMO2)).

Belongs to the TCP-1 chaperonin family. In terms of assembly, component of the chaperonin-containing T-complex (TRiC), a hexadecamer composed of two identical back-to-back stacked rings enclosing a protein folding chamber. Each ring is made up of eight different subunits: TCP1/CCT1, CCT2, CCT3, CCT4, CCT5, CCT6A/CCT6, CCT7, CCT8. Interacts with PACRG. Interacts with DNAAF4. Interacts with synaptic plasticity regulator PANTS.

The protein resides in the cytoplasm. The protein localises to the cytoskeleton. It localises to the microtubule organizing center. It is found in the centrosome. Its subcellular location is the cilium basal body. It carries out the reaction ATP + H2O = ADP + phosphate + H(+). Component of the chaperonin-containing T-complex (TRiC), a molecular chaperone complex that assists the folding of actin, tubulin and other proteins upon ATP hydrolysis. The TRiC complex mediates the folding of WRAP53/TCAB1, thereby regulating telomere maintenance. As part of the TRiC complex may play a role in the assembly of BBSome, a complex involved in ciliogenesis regulating transports vesicles to the cilia. The protein is T-complex protein 1 subunit theta (CCT8) of Homo sapiens (Human).